The primary structure comprises 669 residues: DNA ligase (669 aa).

NAD(+) contacts are provided by residues 33–37, 82–83, and Glu-114; these read DAEYD and SL. The active-site N6-AMP-lysine intermediate is the Lys-116. Residues Arg-137, Glu-174, Lys-291, and Lys-315 each coordinate NAD(+). Residues Cys-409, Cys-412, Cys-427, and Cys-433 each coordinate Zn(2+). The BRCT domain occupies 593-669; that stretch reads EIPQPLAGKV…QTEQDLLALL (77 aa).

This sequence belongs to the NAD-dependent DNA ligase family. LigA subfamily. Mg(2+) is required as a cofactor. Mn(2+) serves as cofactor.

It carries out the reaction NAD(+) + (deoxyribonucleotide)n-3'-hydroxyl + 5'-phospho-(deoxyribonucleotide)m = (deoxyribonucleotide)n+m + AMP + beta-nicotinamide D-nucleotide.. Functionally, DNA ligase that catalyzes the formation of phosphodiester linkages between 5'-phosphoryl and 3'-hydroxyl groups in double-stranded DNA using NAD as a coenzyme and as the energy source for the reaction. It is essential for DNA replication and repair of damaged DNA. This chain is DNA ligase, found in Vibrio vulnificus (strain CMCP6).